A 460-amino-acid polypeptide reads, in one-letter code: Argininosuccinate lyase (460 aa).

This sequence belongs to the lyase 1 family. Argininosuccinate lyase subfamily.

It localises to the cytoplasm. It carries out the reaction 2-(N(omega)-L-arginino)succinate = fumarate + L-arginine. It functions in the pathway amino-acid biosynthesis; L-arginine biosynthesis; L-arginine from L-ornithine and carbamoyl phosphate: step 3/3. The sequence is that of Argininosuccinate lyase from Maridesulfovibrio salexigens (strain ATCC 14822 / DSM 2638 / NCIMB 8403 / VKM B-1763) (Desulfovibrio salexigens).